The sequence spans 1312 residues: MSRIEKMSTLGVRSFGIEDKDKQIISFFSPLTILVGPNGAGKTTIIECLKYICTGDFPPGTKGNTFVHDPKVAQETDVRAQIRLQFRDVNGEMVLVQRSMLCSQKSKKTEFKTLEGVITRIKHGEKVSLSSKCAEIDREMISCLGVSKSVLNNVIFCHQEDSNWPLSEGKALKQKFDEIFSATRYIKALDTLRQVRQTQGQKVKECQTELKYLRQNKEKACEIRDQITSKEAQLASSREIVKAYENELEPLKNRLKEIEHNLSKIMRLDNEIKALDSRKKQMEKDNSELEQKMEKVFQGTDEQLNDLYHNHQRTVREKERRLVDCQRELEKLSKEARLLNQERAELLVEQGRLQLQADRHQEHIRARDSLIQSLAAHLELDGFERGPFSERQIKNFHELVRERQEREAKTASQLLSDLTDKEALKQRQMDEMRDKKSGLGRMIELKTEILTKKQTELRNVRNELQQLEGSSDRILELDQELTKAERELSKAEKNSSIETLKAEILNLQSEKADLDRNLRKLDQEMEQLNHHTTTRTQMEMLTKDKTDKDEQIRKIKSRHSDELTSLLGYFPNKKQLEDWLHSKSKEINQTRDRLAKLNKELASAEQNKNHINNELKKKEEQLSSYEDKLFDVCGSQDFESDLDRLKEDIEKSSKQRAMLAGATAVYSQFITQLTDENQSCCPGCQRVFQTEAELQEVISDLQSKLRLAPDKLKSTESELKKKERRRDEMLGLVPMRQSIIDLKEKEIPELRNRLQSVNRDIQRLKNDIEEQETLLGTVMPEEESAKVCLTDVTIMERFQMELKDVERKIAQQAAKLQGVDLDRTVQQVNQEKQEKQHKLDTVSSKIELNRKLIQDQQEQIQHLKSKTNELKSEKLQIATNLQRRQQMEEQTVELSTEVQSLNREIKDAKEQINPLEIALEKLQQEKEELIHRKNTSNKMAQDKINDIKEKVKNIHGYMKDIENYIQDGKDDYKKQKETELNEVVIQLNECDKHKEKINKEMGTMRQDIDTKKIQERWLQDNLTLRKRREELKEVEEERKQHLKEMGQMQVLQMKNEHQKLEENIDTIKRNHSLALGRQKGYEEEILHFKKELREPQFRDAEEKYREMMIVMRTTELVNKDLDIYYKTLDHAIMKFHSMKMEEINKIIRDLWRSTYRGQDIEYIEIRSDADENVSASDKRRNYNYRVVMLKGDTALDMRGRCSAGQKVLASLIIRLALAETFCLNCGILALDEPTTNLDRENIESLAHALVEIIKSRSQQRNFQLLVITHDEDFVELLGRSEYVEKFYRVKKNIDQCSEIVKSSINSLGSYVH.

Residues R13, N38, G39, G41, K42, T43, T44, V67, D69, and Q159 each coordinate ATP. T43 serves as a coordination point for Mg(2+). Q159 is a binding site for Mg(2+). Coiled coils occupy residues 200–534 (GQKV…HTTT) and 635–673 (SQDFESDLDRLKEDIEKSSKQRAMLAGATAVYSQFITQL). The residue at position 635 (S635) is a Phosphoserine. The Zinc-hook domain maps to 635–734 (SQDFESDLDR…RRDEMLGLVP (100 aa)). Residues C681 and C684 each coordinate Zn(2+). T690 is modified (phosphothreonine). Coiled-coil stretches lie at residues 706-734 (RLAPDKLKSTESELKKKERRRDEMLGLVP) and 754-954 (LQSV…VKNI). N6-acetyllysine is present on K959. A coiled-coil region spans residues 1019–1075 (QDNLTLRKRREELKEVEEERKQHLKEMGQMQVLQMKNEHQKLEENIDTIKRNHSLAL).

This sequence belongs to the SMC family. RAD50 subfamily. As to quaternary structure, component of the MRN complex composed of two heterodimers RAD50 and MRE11 associated with a single NBN. The MRN complexes dimerize on DNA to form joined MRN-MRN oligomers required for DNA double-strand break repair. As part of the MRN complex, interacts with MCM8 and MCM9; the interaction recruits the complex to DNA repair sites. Component of the BASC complex, at least composed of BRCA1, MSH2, MSH6, MLH1, ATM, BLM, RAD50, MRE11 and NBN. Found in a complex with TERF2. Interacts with RINT1. Interacts with BRCA1 via its N-terminal domain. Interacts with DCLRE1C/Artemis. Interacts with MRNIP. Interacts with CYREN (via XLF motif). Interacts with C1QBP and MRE11; interaction takes place in absence of DNA damage to form the MRC (MRE11-RAD50-C1QBP) complex that inhibits the activity of MRE11. Zn(2+) serves as cofactor. Post-translationally, phosphorylation at Ser-635 by ATM in response to DNA damage is required for double-strand break (DSB) repair. As to expression, present at low levels in the heart at fetal-day 17, at relatively constant levels at postnatal days 10, 17 and 21 and at slightly lower levels in the adult heart. Detected in liver, kidney and lung. Barely detectable in skeletal muscle with slightly higher levels observed in brain and the ventricles of the heart (at protein level).

It is found in the nucleus. It localises to the chromosome. Its subcellular location is the telomere. The enzyme catalyses ATP + H2O = ADP + phosphate + H(+). In terms of biological role, component of the MRN complex, which plays a central role in double-strand break (DSB) repair, DNA recombination, maintenance of telomere integrity and meiosis. The MRN complex is involved in the repair of DNA double-strand breaks (DSBs) via homologous recombination (HR), an error-free mechanism which primarily occurs during S and G2 phases. The complex (1) mediates the end resection of damaged DNA, which generates proper single-stranded DNA, a key initial steps in HR, and is (2) required for the recruitment of other repair factors and efficient activation of ATM and ATR upon DNA damage. The MRN complex possesses single-strand endonuclease activity and double-strand-specific 3'-5' exonuclease activity, which are provided by MRE11, to initiate end resection, which is required for single-strand invasion and recombination. Within the complex, RAD50 is both required to bind DNA ends and hold them in close proximity and regulate the activity of MRE11. RAD50 provides an ATP-dependent control of MRE11 by positioning DNA ends into the MRE11 active site: ATP-binding induces a large structural change from an open form with accessible MRE11 nuclease sites into a closed form. The MRN complex is also required for DNA damage signaling via activation of the ATM and ATR kinases: the nuclease activity of MRE11 is not required to activate ATM and ATR. The MRN complex is also required for the processing of R-loops. In telomeres the MRN complex may modulate t-loop formation. This chain is DNA repair protein RAD50 (Rad50), found in Rattus norvegicus (Rat).